A 631-amino-acid polypeptide reads, in one-letter code: Chaperone protein DnaK (631 aa).

T197 carries the post-translational modification Phosphothreonine; by autocatalysis. Positions 600–631 are disordered; that stretch reads KKENPQAADAQQGNTANAGKKKDDDVIDAEVE.

It belongs to the heat shock protein 70 family.

Acts as a chaperone. The polypeptide is Chaperone protein DnaK (Wolinella succinogenes (strain ATCC 29543 / DSM 1740 / CCUG 13145 / JCM 31913 / LMG 7466 / NCTC 11488 / FDC 602W) (Vibrio succinogenes)).